Reading from the N-terminus, the 206-residue chain is Small ribosomal subunit protein uS4 (206 aa).

One can recognise an S4 RNA-binding domain in the interval 96–156 (GRLDNVVYRM…EKAKKQSRVK (61 aa)).

It belongs to the universal ribosomal protein uS4 family. As to quaternary structure, part of the 30S ribosomal subunit. Contacts protein S5. The interaction surface between S4 and S5 is involved in control of translational fidelity.

Functionally, one of the primary rRNA binding proteins, it binds directly to 16S rRNA where it nucleates assembly of the body of the 30S subunit. With S5 and S12 plays an important role in translational accuracy. In Erwinia tasmaniensis (strain DSM 17950 / CFBP 7177 / CIP 109463 / NCPPB 4357 / Et1/99), this protein is Small ribosomal subunit protein uS4.